We begin with the raw amino-acid sequence, 205 residues long: Cytochrome c biogenesis ATP-binding export protein CcmA (205 aa).

Residues 2 to 204 (LEVSNLTAIR…SPKLRKIKLG (203 aa)) form the ABC transporter domain. 34–41 (GRNGTGKT) provides a ligand contact to ATP.

It belongs to the ABC transporter superfamily. CcmA exporter (TC 3.A.1.107) family. As to quaternary structure, the complex is composed of two ATP-binding proteins (CcmA) and two transmembrane proteins (CcmB).

Its subcellular location is the cell inner membrane. The enzyme catalyses heme b(in) + ATP + H2O = heme b(out) + ADP + phosphate + H(+). Part of the ABC transporter complex CcmAB involved in the biogenesis of c-type cytochromes; once thought to export heme, this seems not to be the case, but its exact role is uncertain. Responsible for energy coupling to the transport system. This is Cytochrome c biogenesis ATP-binding export protein CcmA from Vibrio parahaemolyticus serotype O3:K6 (strain RIMD 2210633).